The primary structure comprises 753 residues: Neuroendocrine convertase 1 (753 aa).

Residues M1–A27 form the signal peptide. The propeptide occupies K28–R110. One can recognise a Peptidase S8 domain in the interval Q129–V450. Residues D167 and H208 each act as charge relay system in the active site. 2 disulfide bridges follow: C225-C374 and C317-C347. The Charge relay system role is filled by S382. A glycan (N-linked (GlcNAc...) asparagine) is linked at N401. Residues N460–Q597 form the P/Homo B domain. Residues C467 and C494 are joined by a disulfide bond. Polar residues predominate over residues Q633 to V651. Positions Q633–P663 are disordered. A glycan (N-linked (GlcNAc...) asparagine) is linked at N645.

It belongs to the peptidase S8 family. Furin subfamily. Ca(2+) serves as cofactor.

It localises to the cytoplasmic vesicle. The protein resides in the secretory vesicle. It carries out the reaction Release of protein hormones, neuropeptides and renin from their precursors, generally by hydrolysis of -Lys-Arg-|- bonds.. Its function is as follows. Involved in the processing of hormone and other protein precursors at sites comprised of pairs of basic amino acid residues. Substrates include POMC, renin, enkephalin, dynorphin, somatostatin, insulin and AGRP. In Mus musculus (Mouse), this protein is Neuroendocrine convertase 1 (Pcsk1).